Consider the following 230-residue polypeptide: Porin OmpL (230 aa).

Positions 1 to 20 (MKNINAIILLSSLTSASVFA) are cleaved as a signal peptide.

This sequence belongs to the oligogalacturonate-specific porin KdgM (TC 1.B.35) family. OmpL subfamily.

The protein localises to the cell outer membrane. Outer membrane channel protein that allows an efficient diffusion of low-molecular-weight solutes such as small sugars and tetraglycine. However, the specific substrate recognized by the OmpL channel is unknown. The sequence is that of Porin OmpL (ompL) from Escherichia coli O157:H7.